The chain runs to 280 residues: 3,2-trans-enoyl-CoA isomerase (280 aa).

Residues 68 to 72 and Leu-126 contribute to the substrate site; that span reads SGADF. Catalysis depends on Glu-158, which acts as the Proton donor/acceptor. The Microbody targeting signal signature appears at 278–280; sequence HRL.

Belongs to the enoyl-CoA hydratase/isomerase family. Homohexamer, dimer of trimers. Interacts with DCI1.

Its subcellular location is the peroxisome. The catalysed reaction is a (3Z)-enoyl-CoA = a 4-saturated (2E)-enoyl-CoA. The enzyme catalyses a (3E)-enoyl-CoA = a 4-saturated (2E)-enoyl-CoA. The protein operates within lipid metabolism; fatty acid beta-oxidation. Its function is as follows. Essential for the beta oxidation of unsaturated fatty acids. This chain is 3,2-trans-enoyl-CoA isomerase (ECI1), found in Saccharomyces cerevisiae (strain ATCC 204508 / S288c) (Baker's yeast).